Consider the following 246-residue polypeptide: ATP synthase subunit a (246 aa).

Helical transmembrane passes span 34–54, 92–112, 130–150, 155–175, and 196–216; these read GQTMITTWVVMLLLIGLTFIG, WVPLIGTIFLFVLFANWLGQL, DINTTVALSLIALVSYIYAGL, FGYFKHYFESPILAAVWVLEF, and VVAVLILLVPILVPVPLMILF.

The protein belongs to the ATPase A chain family. As to quaternary structure, F-type ATPases have 2 components, CF(1) - the catalytic core - and CF(0) - the membrane proton channel. CF(1) has five subunits: alpha(3), beta(3), gamma(1), delta(1), epsilon(1). CF(0) has four main subunits: a, b, b' and c.

The protein resides in the cell inner membrane. Its function is as follows. Key component of the proton channel; it plays a direct role in the translocation of protons across the membrane. This Gloeobacter violaceus (strain ATCC 29082 / PCC 7421) protein is ATP synthase subunit a.